The chain runs to 343 residues: Anthranilate phosphoribosyltransferase (343 aa).

5-phospho-alpha-D-ribose 1-diphosphate contacts are provided by residues G84, 87–88 (GD), T92, 94–97 (NIST), 112–120 (KHGNRGVSS), and S124. G84 is a binding site for anthranilate. S96 serves as a coordination point for Mg(2+). N115 lines the anthranilate pocket. R170 provides a ligand contact to anthranilate. The Mg(2+) site is built by D229 and E230.

It belongs to the anthranilate phosphoribosyltransferase family. In terms of assembly, homodimer. The cofactor is Mg(2+).

The catalysed reaction is N-(5-phospho-beta-D-ribosyl)anthranilate + diphosphate = 5-phospho-alpha-D-ribose 1-diphosphate + anthranilate. Its pathway is amino-acid biosynthesis; L-tryptophan biosynthesis; L-tryptophan from chorismate: step 2/5. In terms of biological role, catalyzes the transfer of the phosphoribosyl group of 5-phosphorylribose-1-pyrophosphate (PRPP) to anthranilate to yield N-(5'-phosphoribosyl)-anthranilate (PRA). In Burkholderia cenocepacia (strain ATCC BAA-245 / DSM 16553 / LMG 16656 / NCTC 13227 / J2315 / CF5610) (Burkholderia cepacia (strain J2315)), this protein is Anthranilate phosphoribosyltransferase.